The sequence spans 88 residues: N(2)-fixation sustaining protein CowN (88 aa).

Belongs to the CowN family.

Is required to sustain N(2)-dependent growth in the presence of low levels of carbon monoxide (CO). Probably acts by protecting the N(2) fixation ability of the nitrogenase complex, which is inactivated in the presence of CO. In Rhodomicrobium vannielii (strain ATCC 17100 / DSM 162 / LMG 4299 / NCIMB 10020 / ATH 3.1.1), this protein is N(2)-fixation sustaining protein CowN.